Here is a 427-residue protein sequence, read N- to C-terminus: Gamma-glutamyl phosphate reductase (427 aa).

The protein belongs to the gamma-glutamyl phosphate reductase family.

It localises to the cytoplasm. It carries out the reaction L-glutamate 5-semialdehyde + phosphate + NADP(+) = L-glutamyl 5-phosphate + NADPH + H(+). The protein operates within amino-acid biosynthesis; L-proline biosynthesis; L-glutamate 5-semialdehyde from L-glutamate: step 2/2. Catalyzes the NADPH-dependent reduction of L-glutamate 5-phosphate into L-glutamate 5-semialdehyde and phosphate. The product spontaneously undergoes cyclization to form 1-pyrroline-5-carboxylate. This Rhizobium etli (strain CIAT 652) protein is Gamma-glutamyl phosphate reductase.